Consider the following 212-residue polypeptide: GrpE protein homolog, mitochondrial (212 aa).

The protein belongs to the GrpE family. Component of the PAM complex, at least composed of mtHsp70, MGE1, TIM44, PAM16, PAM17 and PAM18.

It is found in the mitochondrion matrix. Functionally, essential component of the PAM complex, a complex required for the translocation of transit peptide-containing proteins from the inner membrane into the mitochondrial matrix in an ATP-dependent manner. Seems to control the nucleotide-dependent binding of SSC1 to substrate proteins. In Eremothecium gossypii (strain ATCC 10895 / CBS 109.51 / FGSC 9923 / NRRL Y-1056) (Yeast), this protein is GrpE protein homolog, mitochondrial (mge1).